Here is a 131-residue protein sequence, read N- to C-terminus: Small ribosomal subunit protein uS8 (131 aa).

The protein belongs to the universal ribosomal protein uS8 family. Part of the 30S ribosomal subunit. Contacts proteins S5 and S12.

Its function is as follows. One of the primary rRNA binding proteins, it binds directly to 16S rRNA central domain where it helps coordinate assembly of the platform of the 30S subunit. The protein is Small ribosomal subunit protein uS8 of Sulfurovum sp. (strain NBC37-1).